The sequence spans 475 residues: Aspartyl/glutamyl-tRNA(Asn/Gln) amidotransferase subunit B (475 aa).

The protein belongs to the GatB/GatE family. GatB subfamily. Heterotrimer of A, B and C subunits.

The catalysed reaction is L-glutamyl-tRNA(Gln) + L-glutamine + ATP + H2O = L-glutaminyl-tRNA(Gln) + L-glutamate + ADP + phosphate + H(+). It catalyses the reaction L-aspartyl-tRNA(Asn) + L-glutamine + ATP + H2O = L-asparaginyl-tRNA(Asn) + L-glutamate + ADP + phosphate + 2 H(+). In terms of biological role, allows the formation of correctly charged Asn-tRNA(Asn) or Gln-tRNA(Gln) through the transamidation of misacylated Asp-tRNA(Asn) or Glu-tRNA(Gln) in organisms which lack either or both of asparaginyl-tRNA or glutaminyl-tRNA synthetases. The reaction takes place in the presence of glutamine and ATP through an activated phospho-Asp-tRNA(Asn) or phospho-Glu-tRNA(Gln). The polypeptide is Aspartyl/glutamyl-tRNA(Asn/Gln) amidotransferase subunit B (Hydrogenovibrio crunogenus (strain DSM 25203 / XCL-2) (Thiomicrospira crunogena)).